We begin with the raw amino-acid sequence, 190 residues long: Translation initiation factor IF-3 (190 aa).

The protein belongs to the IF-3 family. As to quaternary structure, monomer.

Its subcellular location is the cytoplasm. Functionally, IF-3 binds to the 30S ribosomal subunit and shifts the equilibrium between 70S ribosomes and their 50S and 30S subunits in favor of the free subunits, thus enhancing the availability of 30S subunits on which protein synthesis initiation begins. In Prochlorococcus marinus (strain AS9601), this protein is Translation initiation factor IF-3.